The chain runs to 251 residues: Ferritin-1, chloroplastic (251 aa).

The transit peptide at 1–45 (MLLKAAPAFALLNTQGENLSPLFSSSKSFSPKNGNRFVVSASKAT) directs the protein to the chloroplast. Residues 46–78 (NHKPLTGVVFEPFEELKKELMLVPAVPDTSLCR) are extension peptide (EP). The 154-residue stretch at 79 to 232 (QKYSDDCEAA…EYVAQLRRVG (154 aa)) folds into the Ferritin-like diiron domain. Fe cation-binding residues include Glu-96, Glu-131, His-134, Glu-180, and Gln-214.

Belongs to the ferritin family. As to quaternary structure, oligomer of 24 subunits. There are two types of subunits: L (light) chain and H (heavy) chain. The major chain can be light or heavy, depending on the species and tissue type. The functional molecule forms a roughly spherical shell with a diameter of 12 nm and contains a central cavity into which the insoluble mineral iron core is deposited.

It is found in the plastid. Its subcellular location is the chloroplast. The catalysed reaction is 4 Fe(2+) + O2 + 4 H(+) = 4 Fe(3+) + 2 H2O. Stores iron in a soluble, non-toxic, readily available form. Important for iron homeostasis. Has ferroxidase activity. Iron is taken up in the ferrous form and deposited as ferric hydroxides after oxidation. The protein is Ferritin-1, chloroplastic (FER1) of Nicotiana tabacum (Common tobacco).